We begin with the raw amino-acid sequence, 98 residues long: UPF0251 protein SO_0727 (98 aa).

Belongs to the UPF0251 family.

This chain is UPF0251 protein SO_0727, found in Shewanella oneidensis (strain ATCC 700550 / JCM 31522 / CIP 106686 / LMG 19005 / NCIMB 14063 / MR-1).